A 323-amino-acid polypeptide reads, in one-letter code: Galectin-4 (323 aa).

Galectin domains are found at residues 19-150 (YYQP…INFI) and 194-323 (YFGR…YVQI). 256-262 (WGSEEKK) provides a ligand contact to a beta-D-galactoside. Serine 258 carries the phosphoserine modification.

Monomer.

Its function is as follows. Galectin that binds lactose and a related range of sugars. May be involved in the assembly of adherens junctions. In Homo sapiens (Human), this protein is Galectin-4 (LGALS4).